The following is a 634-amino-acid chain: Probable sulfate transporter 3.5 (634 aa).

Polar residues predominate over residues 1-12; that stretch reads MENTITSSTSSP. Residues 1-25 form a disordered region; the sequence is MENTITSSTSSPKGRGVNFSTPRGF. Residues 1 to 81 lie on the Cytoplasmic side of the membrane; sequence MENTITSSTS…KYDMQKLKYD (81 aa). Residues 82–102 traverse the membrane as a helical segment; the sequence is VLAGITITSLAVPQGISYAKL. Topologically, residues 103 to 104 are extracellular; it reads AS. Residues 105 to 125 form a helical membrane-spanning segment; the sequence is IPPIIGLYSSFVPPFVYAVFG. Over 126-130 the chain is Cytoplasmic; it reads SSNNL. A helical membrane pass occupies residues 131–151; that stretch reads AVGTVAACSLLIAETFGEEMI. Over 152–158 the chain is Extracellular; that stretch reads KNEPELY. The helical transmembrane segment at 159–179 threads the bilayer; the sequence is LHLIFTATLITGLFQFAMGFL. Topologically, residues 180–195 are cytoplasmic; the sequence is RLGILVDFLSHSTITG. The helical transmembrane segment at 196–216 threads the bilayer; it reads FMGGTAIIILLQQLKGIFGLV. The Extracellular segment spans residues 217 to 239; that stretch reads HFTHKTDVVSVLHSILDNRAEWK. Residues 240 to 260 form a helical membrane-spanning segment; that stretch reads WQSTLAGVCFLVFLQSTRYIK. Residues 261 to 265 lie on the Cytoplasmic side of the membrane; the sequence is QRYPK. A helical transmembrane segment spans residues 266-286; it reads LFWVSAMGPMVVVVVGCVVAY. Over 287-321 the chain is Extracellular; sequence LVKGTAHGIATVGPLKKGLNPPSIQLLNFDSKYLG. The chain crosses the membrane as a helical span at residues 322–342; that stretch reads MVFKAGIVTGLIALAEGIAIG. The Cytoplasmic segment spans residues 343 to 358; that stretch reads RSFAVMKNEQTDGNKE. The chain crosses the membrane as a helical span at residues 359 to 379; the sequence is MIAFGLMNVIGSFTSCYLTTG. Topologically, residues 380–395 are extracellular; sequence PFSKTAVNYNAGTKTP. The helical transmembrane segment at 396–416 threads the bilayer; sequence MSNVVMGVCMMLVLLFLAPLF. Topologically, residues 417-420 are cytoplasmic; sequence SYTP. Residues 421–441 form a helical membrane-spanning segment; that stretch reads LVGLSAIIMSAMLGLINYEEM. The Extracellular portion of the chain corresponds to 442–458; it reads YHLFKVDKFDFLVCMSA. Residues 459–479 traverse the membrane as a helical segment; sequence FFGVSFLSMDYGLIISVGFSI. Residues 480–634 lie on the Cytoplasmic side of the membrane; that stretch reads VRALLYVARP…FNLTTTKPEV (155 aa). Positions 508–623 constitute an STAS domain; that stretch reads QYPASEEMLG…LSIDDAVQAC (116 aa).

The protein belongs to the SLC26A/SulP transporter (TC 2.A.53) family.

The protein localises to the membrane. Its function is as follows. H(+)/sulfate cotransporter that may play a role in the regulation of sulfate assimilation. In Arabidopsis thaliana (Mouse-ear cress), this protein is Probable sulfate transporter 3.5 (SULTR3;5).